An 813-amino-acid chain; its full sequence is G-type lectin S-receptor-like serine/threonine-protein kinase LECRK1 (813 aa).

The signal sequence occupies residues Met1–Ala19. Over Gln20 to Ser466 the chain is Extracellular. The region spanning Gln22–Asp149 is the Bulb-type lectin domain. N-linked (GlcNAc...) asparagine glycosylation is found at Asn24, Asn57, Asn164, Asn168, Asn219, and Asn242. Residues Pro293–Lys346 enclose the EGF-like; atypical domain. Cystine bridges form between Cys297-Cys315, Cys309-Cys327, Cys329-Cys345, Cys391-Cys413, and Cys395-Cys401. The region spanning Cys354 to Val433 is the PAN domain. Residues Asn407 and Asn441 are each glycosylated (N-linked (GlcNAc...) asparagine). A helical transmembrane segment spans residues Leu467–Thr487. Residues Tyr488–Pro813 lie on the Cytoplasmic side of the membrane. The Protein kinase domain occupies Ala523–Val797. ATP-binding positions include Leu529–Val537 and Lys553. Asp647 (proton acceptor) is an active-site residue.

Belongs to the protein kinase superfamily. Ser/Thr protein kinase family.

The protein resides in the membrane. It catalyses the reaction L-seryl-[protein] + ATP = O-phospho-L-seryl-[protein] + ADP + H(+). It carries out the reaction L-threonyl-[protein] + ATP = O-phospho-L-threonyl-[protein] + ADP + H(+). Its function is as follows. Involved in innate immunity. Required for the expression of defense-related genes PR1A, LOX2 and CHS1 upon biotic stresses. Required for basal resistance to the fungal blast (M.grisea), bacterial blight (X.oryzae pv. oryzae, Xoo) and the herbivorous insect brown planthopper (N.lugens, BPH). May be involved in several defense signaling pathways. Involved in the promotion of seed germination. Required for the expression of alpha-amylase genes during seed germination. Involved in resistance against the herbivorous insect brown planthopper (N.lugens, BPH). Member of the BPH3 (BPH resistance locus 3) cluster which contains LECRK1, LECRK2 and LECRK3. The polypeptide is G-type lectin S-receptor-like serine/threonine-protein kinase LECRK1 (Oryza sativa subsp. japonica (Rice)).